The sequence spans 881 residues: Translation initiation factor IF-2 (881 aa).

2 disordered regions span residues 53–92 (RSHG…SKTT) and 163–292 (AEAE…FERP). Residues 81–92 (EVTVNSGRSKTT) are compositionally biased toward polar residues. Residues 172–186 (EAAAAAKAAEALAAA) show a composition bias toward low complexity. Positions 219–236 (RNDDRNNRSAPRNERGPG) are enriched in basic and acidic residues. The segment covering 254–263 (GNSNNSNTRG) has biased composition (low complexity). The 170-residue stretch at 380-549 (QRPPVVTIMG…SIQAELLELK (170 aa)) folds into the tr-type G domain. Residues 389-396 (GHVDHGKT) form a G1 region. 389 to 396 (GHVDHGKT) serves as a coordination point for GTP. The tract at residues 414–418 (GITQH) is G2. The interval 435-438 (DTPG) is G3. GTP-binding positions include 435-439 (DTPGH) and 489-492 (NKID). Positions 489–492 (NKID) are G4. The tract at residues 525–527 (SAK) is G5.

This sequence belongs to the TRAFAC class translation factor GTPase superfamily. Classic translation factor GTPase family. IF-2 subfamily.

Its subcellular location is the cytoplasm. Functionally, one of the essential components for the initiation of protein synthesis. Protects formylmethionyl-tRNA from spontaneous hydrolysis and promotes its binding to the 30S ribosomal subunits. Also involved in the hydrolysis of GTP during the formation of the 70S ribosomal complex. This chain is Translation initiation factor IF-2, found in Stenotrophomonas maltophilia (strain K279a).